Consider the following 315-residue polypeptide: Methionyl-tRNA formyltransferase (315 aa).

A (6S)-5,6,7,8-tetrahydrofolate-binding site is contributed by 114–117; sequence SLLP.

It belongs to the Fmt family.

The catalysed reaction is L-methionyl-tRNA(fMet) + (6R)-10-formyltetrahydrofolate = N-formyl-L-methionyl-tRNA(fMet) + (6S)-5,6,7,8-tetrahydrofolate + H(+). Functionally, attaches a formyl group to the free amino group of methionyl-tRNA(fMet). The formyl group appears to play a dual role in the initiator identity of N-formylmethionyl-tRNA by promoting its recognition by IF2 and preventing the misappropriation of this tRNA by the elongation apparatus. In Corynebacterium efficiens (strain DSM 44549 / YS-314 / AJ 12310 / JCM 11189 / NBRC 100395), this protein is Methionyl-tRNA formyltransferase.